The following is a 406-amino-acid chain: Vacuole membrane protein 1 (406 aa).

Ala-2 is modified (N-acetylalanine). Over 2–43 (AENGQNCDQRRVAMNKEQYNGNFTDPSSVNEKKRRDREERQN) the chain is Cytoplasmic. Residues 44 to 63 (IVLWRQPLITLQYFSLETLV) form a helical membrane-spanning segment. Residues 64–77 (ILKEWTSKLWHRQS) are Extracellular-facing. Residues 78–98 (IVVSFLLLLAVLTATYYVEGA) traverse the membrane as a helical segment. Over 99 to 109 (HQQYVQRIEKQ) the chain is Cytoplasmic. Residues 110 to 130 (FLLYAYWIGLGILSSVGLGTG) form a helical membrane-spanning segment. At 131 to 250 (LHTFLLYLGP…ASRAKLAVQN (120 aa)) the chain is on the extracellular side. Positions 173–316 (GTEGTISLWS…FVIVAFSKHI (144 aa)) are VTT domain. Residues 251-271 (LVQKVGFFGILACASIPNPLF) traverse the membrane as a helical segment. Topologically, residues 272–273 (DL) are cytoplasmic. The chain crosses the membrane as a helical span at residues 274-294 (AGITCGHFLVPFWTFFGATLI). The Extracellular segment spans residues 295-306 (GKAIIKMHIQKL). The chain crosses the membrane as a helical span at residues 307–327 (FVIVAFSKHIVEQMVAFIGAV). Topologically, residues 328–363 (PGIGPSLQKPFQEYLEAQRQKLHHRSEMGTPQGENW) are cytoplasmic. Residues 364–384 (LSWMFEKLVVVMVCYFILSII) form a helical membrane-spanning segment. Residues 385-406 (NSMAQSYAKRIQQRLDPKEKTK) lie on the Extracellular side of the membrane.

Belongs to the VMP1 family. As to quaternary structure, interacts with BECN1. Interacts with TJP1. Interacts with TP53INP2. Interacts with TMEM41B. Interacts with ATP2A2, PLN and SLN; competes with PLN and SLN to prevent them from forming an inhibitory complex with ATP2A2. Interacts with ATG2A.

It localises to the endoplasmic reticulum-Golgi intermediate compartment membrane. The protein localises to the cell membrane. The protein resides in the vacuole membrane. It is found in the endoplasmic reticulum membrane. It catalyses the reaction a 1,2-diacyl-sn-glycero-3-phospho-L-serine(in) = a 1,2-diacyl-sn-glycero-3-phospho-L-serine(out). The enzyme catalyses cholesterol(in) = cholesterol(out). The catalysed reaction is a 1,2-diacyl-sn-glycero-3-phosphocholine(in) = a 1,2-diacyl-sn-glycero-3-phosphocholine(out). It carries out the reaction a 1,2-diacyl-sn-glycero-3-phosphoethanolamine(in) = a 1,2-diacyl-sn-glycero-3-phosphoethanolamine(out). In terms of biological role, phospholipid scramblase involved in lipid homeostasis and membrane dynamics processes. Has phospholipid scramblase activity toward cholesterol and phosphatidylserine, as well as phosphatidylethanolamine and phosphatidylcholine. Required for autophagosome formation: participates in early stages of autophagosome biogenesis at the endoplasmic reticulum (ER) membrane by reequilibrating the leaflets of the ER as lipids are extracted by ATG2 (ATG2A or ATG2B) to mediate autophagosome assembly. Regulates ATP2A2 activity to control ER-isolation membrane contacts for autophagosome formation. In addition to autophagy, involved in other processes in which phospholipid scramblase activity is required. Modulates ER contacts with lipid droplets, mitochondria and endosomes. Plays an essential role in formation of cell junctions. Upon stress such as bacterial and viral infection, promotes formation of cytoplasmic vacuoles followed by cell death. Involved in the cytoplasmic vacuolization of acinar cells during the early stage of acute pancreatitis. The polypeptide is Vacuole membrane protein 1 (Bos taurus (Bovine)).